A 168-amino-acid chain; its full sequence is MATRFRSTLLVITLFVLIDWVTKLVVLLQYKDLQILTHPTLYTHSWGRFSFSIAPVFNEGAAFGLFSNYKYFLFLLRIFVILGLLAYLFFKKKSIQSTTQTALVLLCAGAIGNVGDIIFYGHIVDFISFNYKQWAFPTFNVADVLISLGTLLLVYKFYFPTKQTEKKR.

3 consecutive transmembrane segments (helical) span residues 8-28 (TLLV…VVLL), 70-90 (KYFL…YLFF), and 104-124 (VLLC…GHIV). Catalysis depends on residues Asp-125 and Asp-143. A helical membrane pass occupies residues 134–154 (WAFPTFNVADVLISLGTLLLV).

It belongs to the peptidase A8 family.

It is found in the cell inner membrane. The catalysed reaction is Release of signal peptides from bacterial membrane prolipoproteins. Hydrolyzes -Xaa-Yaa-Zaa-|-(S,diacylglyceryl)Cys-, in which Xaa is hydrophobic (preferably Leu), and Yaa (Ala or Ser) and Zaa (Gly or Ala) have small, neutral side chains.. It functions in the pathway protein modification; lipoprotein biosynthesis (signal peptide cleavage). This protein specifically catalyzes the removal of signal peptides from prolipoproteins. The protein is Lipoprotein signal peptidase of Chlamydia pneumoniae (Chlamydophila pneumoniae).